Here is a 692-residue protein sequence, read N- to C-terminus: NAD(P)H-quinone oxidoreductase subunit 5, chloroplastic (692 aa).

The next 17 helical transmembrane spans lie at 9-29 (WFVPLFPFLASILLGIGLFFF), 39-59 (LSSFISIMFLNIAMLLSFHFF), 89-109 (LDPLTSIMLVLVTTVAVMVMI), 120-140 (GYIKFFCYLSLFTASMLGLVL), 147-167 (VYIFWELVGMCSYLLIGFWFT), 184-204 (IGDFGLLLGILGFYWITGSFD), 219-239 (NQINLVFATLCALFLFLGPVA), 258-278 (TPISALIHAATMVAAGIFLVA), 289-309 (FVMSIISWTGAITALLGATIA), 327-347 (LGYMMLALGIGSYKAGLFHLI), 354-374 (ALLFLGSGSVIHSMEPIVGYH), 395-415 (AITFLFGTLSLCGIPPFACFW), 425-445 (WLHFPILGSIAFFTAGLTAFY), 503-523 (LFPLIILTIPTVFIGFIGILF), 555-575 (FLFNAIPSVSIAFFGILIAFY), 643-663 (WIIDGIINGIGIFSFFGGESL), and 671-691 (ISSYLFFIIFCMFLFFLYSYI).

Belongs to the complex I subunit 5 family. NDH is composed of at least 16 different subunits, 5 of which are encoded in the nucleus.

The protein resides in the plastid. The protein localises to the chloroplast thylakoid membrane. It catalyses the reaction a plastoquinone + NADH + (n+1) H(+)(in) = a plastoquinol + NAD(+) + n H(+)(out). It carries out the reaction a plastoquinone + NADPH + (n+1) H(+)(in) = a plastoquinol + NADP(+) + n H(+)(out). In terms of biological role, NDH shuttles electrons from NAD(P)H:plastoquinone, via FMN and iron-sulfur (Fe-S) centers, to quinones in the photosynthetic chain and possibly in a chloroplast respiratory chain. The immediate electron acceptor for the enzyme in this species is believed to be plastoquinone. Couples the redox reaction to proton translocation, and thus conserves the redox energy in a proton gradient. This is NAD(P)H-quinone oxidoreductase subunit 5, chloroplastic (ndhF) from Marchantia polymorpha (Common liverwort).